Consider the following 433-residue polypeptide: Ribulose bisphosphate carboxylase/oxygenase activase, chloroplastic (433 aa).

Over residues methionine 1–serine 20 the composition is skewed to polar residues. A chloroplast-targeting transit peptide spans methionine 1 to alanine 53. Positions methionine 1–lysine 60 are disordered. Glycine 161–serine 168 provides a ligand contact to ATP.

This sequence belongs to the RuBisCO activase family.

The protein resides in the plastid. It is found in the chloroplast stroma. Its function is as follows. Activation of RuBisCO (ribulose-1,5-bisphosphate carboxylase/oxygenase; EC 4.1.1.39) involves the ATP-dependent carboxylation of the epsilon-amino group of lysine leading to a carbamate structure. The protein is Ribulose bisphosphate carboxylase/oxygenase activase, chloroplastic (RCA1) of Zea mays (Maize).